Here is a 543-residue protein sequence, read N- to C-terminus: Chaperonin GroEL 2 (543 aa).

ATP contacts are provided by residues 29–32 (TLGP), 86–90 (DGTTT), glycine 413, 477–479 (DAA), and aspartate 493. The disordered stretch occupies residues 523–543 (PQEPEPAAGGHGHGHQHGPGF). Basic residues predominate over residues 534 to 543 (GHGHQHGPGF).

Belongs to the chaperonin (HSP60) family. Forms a cylinder of 14 subunits composed of two heptameric rings stacked back-to-back. Interacts with the co-chaperonin GroES.

It localises to the cytoplasm. The catalysed reaction is ATP + H2O + a folded polypeptide = ADP + phosphate + an unfolded polypeptide.. In terms of biological role, together with its co-chaperonin GroES, plays an essential role in assisting protein folding. The GroEL-GroES system forms a nano-cage that allows encapsulation of the non-native substrate proteins and provides a physical environment optimized to promote and accelerate protein folding. This Salinispora tropica (strain ATCC BAA-916 / DSM 44818 / JCM 13857 / NBRC 105044 / CNB-440) protein is Chaperonin GroEL 2.